Consider the following 428-residue polypeptide: uncharacterized protein (428 aa).

10 consecutive transmembrane segments (helical) span residues V26 to F46, A51 to L71, A90 to L110, T135 to G155, M177 to G197, L223 to V243, T278 to V298, L314 to I334, T359 to A379, and V407 to F427.

It belongs to the CitM (TC 2.A.11) transporter family.

The protein resides in the cell membrane. This is an uncharacterized protein from Mycobacterium tuberculosis (strain CDC 1551 / Oshkosh).